Consider the following 379-residue polypeptide: MPTAFPEDSVGLVSPQVFRFSEPLALACGRSLAEYELVVETYGELNAARSNAVLICHALSGHHHAAGYHSPNDRKPGWWDSCIGPGKPIDTNKFFVVSLNNLGGCNGSTGPSSANPATGKPYGADFPVMTVEDWVHSQARLADVLGIEQWAAVIGGSLGGMQALQWSISYPERVRHCLAIASAPKLSAQNIAFNEVARQAILTDPEFHGGHFQERGVIPKRGLMLARMVGHITYLSDDAMGEKFGRGLKSEKLNYDFHSVEFQVESYLRYQGEEFSGRFDANTYLLMTKALDYFDPAAAHDGDLARTLAVAKADFCLMSFTTDWRFSPARSREIVDALTAAKKNVCYLEIDAPQGHDAFLMPIPRYLQAFGSYMKRIEV.

An AB hydrolase-1 domain is found at Asn-51 to Leu-360. Ser-157 acts as the Nucleophile in catalysis. A substrate-binding site is contributed by Arg-227. Catalysis depends on residues Asp-323 and His-356. Position 357 (Asp-357) interacts with substrate.

The protein belongs to the AB hydrolase superfamily. MetX family. In terms of assembly, homodimer.

The protein resides in the cytoplasm. The catalysed reaction is L-homoserine + succinyl-CoA = O-succinyl-L-homoserine + CoA. The protein operates within amino-acid biosynthesis; L-methionine biosynthesis via de novo pathway; O-succinyl-L-homoserine from L-homoserine: step 1/1. Functionally, transfers a succinyl group from succinyl-CoA to L-homoserine, forming succinyl-L-homoserine. The chain is Homoserine O-succinyltransferase from Ectopseudomonas mendocina (strain ymp) (Pseudomonas mendocina).